Here is a 294-residue protein sequence, read N- to C-terminus: MSEVKVSAKMVKELRDRTGLGMMECKKALEESNGDVETAIDNLRKSGQAKAAKKAGNIAADGAIIIAQGESKAFLLEVNCQTDFVAKDENFTAFAETVANIALENNVTDVAAIAELPYGNDQTVEEARVSLVQKIGENIQIRRVEVLEGANIAAYRHGLRIGVVVSYEGGSAETGKNLAMHIAAFNPVAIDDEDVAADLLAREKDIIEAKARESGKPDNIVEKMIEGGLRKYLEEVTLLRQSYVMDNEKKVGDVLKAEGVKVLGFKRLEVGEGIEKKQEDFAAEVAATQALANK.

The involved in Mg(2+) ion dislocation from EF-Tu stretch occupies residues 82–85 (TDFV).

This sequence belongs to the EF-Ts family.

Its subcellular location is the cytoplasm. In terms of biological role, associates with the EF-Tu.GDP complex and induces the exchange of GDP to GTP. It remains bound to the aminoacyl-tRNA.EF-Tu.GTP complex up to the GTP hydrolysis stage on the ribosome. This is Elongation factor Ts from Psychrobacter arcticus (strain DSM 17307 / VKM B-2377 / 273-4).